The following is a 126-amino-acid chain: MKSAVLFLLGIIFLEQCGVRGTLVIRNARCSCISTSRGTIHYKSLKDLKQFAPSPNCNKTEIIATLKNGDQTCLDPDSANVKKLMKEWEKKISQKKKQKRGKKHQKNMKNRKPKTPQSRRRSRKTT.

A signal peptide spans 1-21; that stretch reads MKSAVLFLLGIIFLEQCGVRG. 2 disulfide bridges follow: C30–C57 and C32–C73. N-linked (GlcNAc...) asparagine glycosylation is present at N58. A disordered region spans residues 91 to 126; it reads KISQKKKQKRGKKHQKNMKNRKPKTPQSRRRSRKTT. The span at 93–126 shows a compositional bias: basic residues; the sequence is SQKKKQKRGKKHQKNMKNRKPKTPQSRRRSRKTT.

Belongs to the intercrine alpha (chemokine CxC) family.

The protein resides in the secreted. In terms of biological role, may be a cytokine that affects the growth, movement, or activation state of cells that participate in immune and inflammatory response. The polypeptide is C-X-C motif chemokine 9 (Cxcl9) (Mus musculus (Mouse)).